The sequence spans 676 residues: MEKNLPDIFFFPNCVNVFSYKYSQDEFSNMSKTERDSFSLAVFPVIKHRWHNAHVVKHKGIYKVSTEARGKKVSPPSLGKPAHINLTAKQYIYSEHTISFECYSFLKCITNTEINSFDEYILRGLLEAGNSLQIFSNSVGKRTDTIGVLGNKYPFSKIPLASLTPKAQREIFSAWISHRPVVLTGGTGVGKTSQVPKLLLWFNYLFGGFSTLDKITDFHERPVILSLPRIALVRLHSNTILKSLGFKVLDGSPISLRYGSIPEELINKQPKKYGIVFSTHKLSLTKLFSYGTLIIDEVHEHDQIGDIIIAVARKHHTKIDSMFLMTATLEDDRERLKVFLPNPAFIHIPGDTLFKISEVFIHNKINPSSRMAYIEEEKRNLVTAIQMYTPPDGSSGIVFVASVAQCHEYKSYLEKRLPYDMYIIHGKVLDIDEILEKVYSSPNVSIIISTPYLESSVTIHNVTHIYDMGRVFVPAPFGGSQQFISKSMRDQRKGRVGRVNPGTYVYFYDLSYMKSIQRIDSEFLHNYILYANKFNLTLPEDLFIIPTNLDILWRTKEYIDSFDISTETWNKLLSNYYMKMIEYAKLYVLSPILAEELDNFERTGELTSIVREAILSLNLRIKILNFKHKDDDTYIHFCKILFGVYNGTNATIYYHRPLTGYINIISDTIFVPVDNN.

The Helicase ATP-binding domain occupies 172-347 (FSAWISHRPV…VFLPNPAFIH (176 aa)). Residue 185–192 (GGTGVGKT) coordinates ATP. Positions 296–299 (DEVH) match the DEXH box motif. The 170-residue stretch at 366-535 (NPSSRMAYIE…NYILYANKFN (170 aa)) folds into the Helicase C-terminal domain.

Belongs to the DEAD box helicase family. DEAH subfamily. Monomer.

The protein localises to the virion. It catalyses the reaction ATP + H2O = ADP + phosphate + H(+). In terms of biological role, NTP-dependent helicase that catalyzes unidirectional unwinding of 3'tailed duplex RNAs and plays an important role during transcription of early mRNAs, presumably by preventing R-loop formation behind the elongating RNA polymerase. Might also play a role in the export of newly synthesized mRNA chains out of the core into the cytoplasm. Required for replication and propagation of viral particles. In Homo sapiens (Human), this protein is RNA helicase NPH-II (OPG084).